Reading from the N-terminus, the 1367-residue chain is MKSGSGGGSPTSLWGLLFLSAALSLWPTSGEICGPGIDIRNDYQQLKRLENCTVIEGYLHILLISKAEDYRSYRFPKLTVITEYLLLFRVAGLESLGDLFPNLTVIRGWKLFYNYALVIFEMTNLKDIGLYNLRNITRGAIRIEKNADLCYLSTVDWSLILDAVSNNYIVGNKPPKECGDLCPGTMEEKPMCEKTTINNEYNYRCWTTNRCQKMCPSTCGKRACTENNECCHPECLGSCSAPDNDTACVACRHYYYAGVCVPACPPNTYRFEGWRCVDRDFCANILSAESSDSEGFVIHDGECMQECPSGFIRNGSQSMYCIPCEGPCPKVCEEEKKTKTIDSVTSAQMLQGCTIFKGNLLINIRRGNNIASELENFMGLIEVVTGYVKIRHSHALVSLSFLKNLRLILGEEQLEGNYSFYVLDNQNLQQLWDWDHRNLTIKAGKMYFAFNPKLCVSEIYRMEEVTGTKGRQSKGDINTRNNGERASCESDVLHFTSTTTSKNRIIITWHRYRPPDYRDLISFTVYYKEAPFKNVTEYDGQDACGSNSWNMVDVDLPPNKDVEPGILLHGLKPWTQYAVYVKAVTLTMVENDHIRGAKSEILYIRTNASVPSIPLDVLSASNSSSQLIVKWNPPSLPNGNLSYYIVRWQRQPQDGYLYRHNYCSKDKIPIRKYADGTIDIEEVTENPKTEVCGGEKGPCCACPKTEAEKQAEKEEAEYRKVFENFLHNSIFVPRPERKRRDVMQVANTTMSSRSRNTTAADTYNITDPEELETEYPFFESRVDNKERTVISNLRPFTLYRIDIHSCNHEAEKLGCSASNFVFARTMPAEGADDIPGPVTWEPRPENSIFLKWPEPENPNGLILMYEIKYGSQVEDQRECVSRQEYRKYGGAKLNRLNPGNYTARIQATSLSGNGSWTDPVFFYVQAKTGYENFIHLIIALPVAVLLIVGGLVIMLYVFHRKRNNSRLGNGVLYASVNPEYFSAADVYVPDEWEVAREKITMSRELGQGSFGMVYEGVAKGVVKDEPETRVAIKTVNEAASMRERIEFLNEASVMKEFNCHHVVRLLGVVSQGQPTLVIMELMTRGDLKSYLRSLRPEMENNPVLAPPSLSKMIQMAGEIADGMAYLNANKFVHRDLAARNCMVAEDFTVKIGDFGMTRDIYETDYYRKGGKGLLPVRWMSPESLKDGVFTTYSDVWSFGVVLWEIATLAEQPYQGLSNEQVLRFVMEGGLLDKPDNCPDMLFELMRMCWQYNPKMRPSFLEIISSIKEEMEPGFREVSFYYSEENKLPEPEELDLEPENMESVPLDPSASSSSLPLPDRHSGHKAENGPGPGVLVLRASFDERQPYAHMNGGRKNERALPLPQSSTC.

Residues methionine 1 to glycine 30 form the signal peptide. Residues cysteine 33 and cysteine 52 are joined by a disulfide bond. Residues asparagine 51, asparagine 102, and asparagine 135 are each glycosylated (N-linked (GlcNAc...) asparagine). Cystine bridges form between cysteine 150–cysteine 178, cysteine 182–cysteine 205, cysteine 192–cysteine 211, cysteine 215–cysteine 224, cysteine 219–cysteine 230, cysteine 231–cysteine 239, cysteine 235–cysteine 248, cysteine 251–cysteine 260, cysteine 264–cysteine 276, cysteine 282–cysteine 303, cysteine 307–cysteine 321, cysteine 324–cysteine 328, and cysteine 332–cysteine 353. N-linked (GlcNAc...) asparagine glycosylation is present at asparagine 244. N-linked (GlcNAc...) asparagine glycosylation occurs at asparagine 314. Asparagine 417 and asparagine 438 each carry an N-linked (GlcNAc...) asparagine glycan. Cysteine 455 and cysteine 488 are joined by a disulfide. Fibronectin type-III domains follow at residues aspartate 491–serine 609, valine 610–glutamate 708, proline 735–alanine 828, and isoleucine 834–lysine 927. N-linked (GlcNAc...) asparagine glycosylation is found at asparagine 534, asparagine 607, asparagine 622, asparagine 640, asparagine 747, asparagine 756, asparagine 764, asparagine 900, and asparagine 913. Residues aspartate 741–histidine 935 lie on the Extracellular side of the membrane. Residues leucine 936–histidine 959 traverse the membrane as a helical segment. The Cytoplasmic segment spans residues arginine 960–cysteine 1367. The IRS1- and SHC1-binding signature appears at asparagine 977–tyrosine 980. Tyrosine 980 is modified (phosphotyrosine). Residues isoleucine 999 to phenylalanine 1274 enclose the Protein kinase domain. Residues leucine 1005–valine 1013 and lysine 1033 contribute to the ATP site. Aspartate 1135 serves as the catalytic Proton acceptor. Residues tyrosine 1161, tyrosine 1165, and tyrosine 1166 each carry the phosphotyrosine; by autocatalysis modification. Residues lysine 1168 and lysine 1171 each participate in a glycyl lysine isopeptide (Lys-Gly) (interchain with G-Cter in ubiquitin) cross-link. Serine 1278 is modified (phosphoserine; by GSK3-beta). Position 1282 is a phosphoserine (serine 1282). The interval proline 1288 to cysteine 1367 is disordered. Over residues proline 1290–asparagine 1299 the composition is skewed to acidic residues. The span at methionine 1300–leucine 1316 shows a compositional bias: low complexity. The span at proline 1317–glutamate 1326 shows a compositional bias: basic and acidic residues.

It belongs to the protein kinase superfamily. Tyr protein kinase family. Insulin receptor subfamily. As to quaternary structure, tetramer of 2 alpha and 2 beta chains linked by disulfide bonds. The alpha chains contribute to the formation of the ligand-binding domain, while the beta chain carries the kinase domain. Interacts with PIK3R1 and with the PTB/PID domains of IRS1 and SHC1 in vitro when autophosphorylated on tyrosine residues. Forms a hybrid receptor with INSR, the hybrid is a tetramer consisting of 1 alpha chain and 1 beta chain of INSR and 1 alpha chain and 1 beta chain of IGF1R. Interacts with ARRB1 and ARRB2. Interacts with GRB10. Interacts with RACK1. Interacts with SOCS1, SOCS2 and SOCS3. Interacts with 14-3-3 proteins. Interacts with NMD2. Interacts with MAP3K5. Interacts with STAT3. Found in a ternary complex with IGF1 and ITGAV:ITGB3 or ITGA6:ITGB4. Interacts (nascent precursor form) with ZFAND2B. In terms of assembly, (Microbial infection) Interacts with human respiratory syncytial virus (HRSV) fusion glycoprotein F1/F2 heterodimer. Post-translationally, autophosphorylated on tyrosine residues in response to ligand binding. Autophosphorylation occurs in trans, i.e. one subunit of the dimeric receptor phosphorylates tyrosine residues on the other subunit. Autophosphorylation occurs in a sequential manner; Tyr-1165 is predominantly phosphorylated first, followed by phosphorylation of Tyr-1161 and Tyr-1166. While every single phosphorylation increases kinase activity, all three tyrosine residues in the kinase activation loop (Tyr-1165, Tyr-1161 and Tyr-1166) have to be phosphorylated for optimal activity. Can be autophosphorylated at additional tyrosine residues (in vitro). Autophosphorylated is followed by phosphorylation of juxtamembrane tyrosines and C-terminal serines. May also be phosphorylated at Tyr-1161 and Tyr-1166 by mTORC2. Phosphorylation of Tyr-980 is required for IRS1- and SHC1-binding. Phosphorylation of Ser-1278 by GSK-3beta restrains kinase activity and promotes cell surface expression, it requires a priming phosphorylation at Ser-1282. Dephosphorylated by PTPN1. In terms of processing, polyubiquitinated at Lys-1168 and Lys-1171 through both 'Lys-48' and 'Lys-29' linkages, promoting receptor endocytosis and subsequent degradation by the proteasome. Ubiquitination is facilitated by pre-existing phosphorylation. Sumoylated with SUMO1. Post-translationally, controlled by regulated intramembrane proteolysis (RIP). Undergoes metalloprotease-dependent constitutive ectodomain shedding to produce a membrane-anchored 52 kDa C-Terminal fragment which is further processed by presenilin gamma-secretase to yield an intracellular 50 kDa fragment. As to expression, found as a hybrid receptor with INSR in muscle, heart, kidney, adipose tissue, skeletal muscle, hepatoma, fibroblasts, spleen and placenta (at protein level). Expressed in a variety of tissues. Overexpressed in tumors, including melanomas, cancers of the colon, pancreas prostate and kidney.

The protein resides in the cell membrane. It catalyses the reaction L-tyrosyl-[protein] + ATP = O-phospho-L-tyrosyl-[protein] + ADP + H(+). Activated by autophosphorylation at Tyr-1165, Tyr-1161 and Tyr-1166 on the kinase activation loop; phosphorylation at all three tyrosine residues is required for optimal kinase activity. Inhibited by MSC1609119A-1, BMS-754807, PQIP, benzimidazole pyridinone, isoquinolinedione, bis-azaindole, 3-cyanoquinoline, 2,4-bis-arylamino-1,3-pyrimidine, pyrrolopyrimidine, pyrrole-5-carboxaldehyde, picropodophyllin (PPP), tyrphostin derivatives. While most inhibitors bind to the ATP binding pocket, MSC1609119A-1 functions as allosteric inhibitor and binds close to the DFG motif and the activation loop. Functionally, receptor tyrosine kinase which mediates actions of insulin-like growth factor 1 (IGF1). Binds IGF1 with high affinity and IGF2 and insulin (INS) with a lower affinity. The activated IGF1R is involved in cell growth and survival control. IGF1R is crucial for tumor transformation and survival of malignant cell. Ligand binding activates the receptor kinase, leading to receptor autophosphorylation, and tyrosines phosphorylation of multiple substrates, that function as signaling adapter proteins including, the insulin-receptor substrates (IRS1/2), Shc and 14-3-3 proteins. Phosphorylation of IRSs proteins lead to the activation of two main signaling pathways: the PI3K-AKT/PKB pathway and the Ras-MAPK pathway. The result of activating the MAPK pathway is increased cellular proliferation, whereas activating the PI3K pathway inhibits apoptosis and stimulates protein synthesis. Phosphorylated IRS1 can activate the 85 kDa regulatory subunit of PI3K (PIK3R1), leading to activation of several downstream substrates, including protein AKT/PKB. AKT phosphorylation, in turn, enhances protein synthesis through mTOR activation and triggers the antiapoptotic effects of IGFIR through phosphorylation and inactivation of BAD. In parallel to PI3K-driven signaling, recruitment of Grb2/SOS by phosphorylated IRS1 or Shc leads to recruitment of Ras and activation of the ras-MAPK pathway. In addition to these two main signaling pathways IGF1R signals also through the Janus kinase/signal transducer and activator of transcription pathway (JAK/STAT). Phosphorylation of JAK proteins can lead to phosphorylation/activation of signal transducers and activators of transcription (STAT) proteins. In particular activation of STAT3, may be essential for the transforming activity of IGF1R. The JAK/STAT pathway activates gene transcription and may be responsible for the transforming activity. JNK kinases can also be activated by the IGF1R. IGF1 exerts inhibiting activities on JNK activation via phosphorylation and inhibition of MAP3K5/ASK1, which is able to directly associate with the IGF1R. When present in a hybrid receptor with INSR, binds IGF1. PubMed:12138094 shows that hybrid receptors composed of IGF1R and INSR isoform Long are activated with a high affinity by IGF1, with low affinity by IGF2 and not significantly activated by insulin, and that hybrid receptors composed of IGF1R and INSR isoform Short are activated by IGF1, IGF2 and insulin. In contrast, PubMed:16831875 shows that hybrid receptors composed of IGF1R and INSR isoform Long and hybrid receptors composed of IGF1R and INSR isoform Short have similar binding characteristics, both bind IGF1 and have a low affinity for insulin. This Homo sapiens (Human) protein is Insulin-like growth factor 1 receptor (IGF1R).